Here is a 343-residue protein sequence, read N- to C-terminus: tRNA N6-adenosine threonylcarbamoyltransferase (343 aa).

2 residues coordinate Fe cation: His-120 and His-124. Substrate is bound by residues 142–146 (VVSGG), Asp-175, Gly-188, Asp-192, and Asn-281. Asp-310 contributes to the Fe cation binding site.

Belongs to the KAE1 / TsaD family. It depends on Fe(2+) as a cofactor.

The protein localises to the cytoplasm. It carries out the reaction L-threonylcarbamoyladenylate + adenosine(37) in tRNA = N(6)-L-threonylcarbamoyladenosine(37) in tRNA + AMP + H(+). Required for the formation of a threonylcarbamoyl group on adenosine at position 37 (t(6)A37) in tRNAs that read codons beginning with adenine. Is involved in the transfer of the threonylcarbamoyl moiety of threonylcarbamoyl-AMP (TC-AMP) to the N6 group of A37, together with TsaE and TsaB. TsaD likely plays a direct catalytic role in this reaction. This chain is tRNA N6-adenosine threonylcarbamoyltransferase, found in Bacillus thuringiensis (strain Al Hakam).